A 565-amino-acid polypeptide reads, in one-letter code: UV-stimulated scaffold protein A homolog (565 aa).

The segment at 11–156 (RKNLNRILQE…VTLRKTKFVD (146 aa)) is VHS-like. A coiled-coil region spans residues 155–215 (VDYENGEKKI…ELETTMEMLV (61 aa)). A UVSSA-type zinc finger spans residues 441–468 (DRECLAKLPSGALCKRKDMFKCPLHGPL). Residues C444, C454, C462, and H465 each coordinate Zn(2+). A coiled-coil region spans residues 480–510 (DEDRLKEIDRKERKRLKEAEEFSRKIVKEYE). Disordered stretches follow at residues 510–530 (ESKT…SRLQ) and 542–565 (VSAD…FSHL).

This sequence belongs to the UVSSA family.

Its subcellular location is the chromosome. Functionally, factor involved in transcription-coupled nucleotide excision repair (TC-NER) in response to UV damage. TC-NER allows RNA polymerase II-blocking lesions to be rapidly removed from the transcribed strand of active genes. This chain is UV-stimulated scaffold protein A homolog, found in Caenorhabditis briggsae.